The chain runs to 470 residues: MSYANNNGSLSVPQYISTIDLTTETKPKFVKYFYYTVFNFAKQYTNPLILPFPITLEIIYHGDIDIGANLFSSKTFAVEEVSGSKFHISGQGTAYFWYRYGHIDPASFDLIAQTAISNKDWLVLDAILHTRSFIEAIDFLVNNPQTWTIIAEGLDWQLNEIGARDLFAYLTNNSYDTRKLAQFLTILAYIDPDVLVKVGIPVYTCDNPNKTFEKYLNYLPASPLVPIYSELSEQSSEISELFIQTSELSDDVLALMAQIVKIYYQLSEQQSEISELNIESLIHSSEITQLFFITSEQSFQISDLFTETSEIIFNLDQLSENLILFTNAGQIINNFLKMVHLFKAVLIILKILQHAVKTIAPVSELGILTDLGQLLDNILGMTSESIFYYTSELDIRGIIQTLVNLINQLLGINITLSSECCEEQEEKEKKKEKEKEKKKEKDDDDDQQNNNNNDQNGLGLGLGLNFGLNL.

Residues 418 to 453 (SECCEEQEEKEKKKEKEKEKKKEKDDDDDQQNNNNN) adopt a coiled-coil conformation. The tract at residues 423 to 470 (EQEEKEKKKEKEKEKKKEKDDDDDQQNNNNNDQNGLGLGLGLNFGLNL) is disordered. The span at 426–441 (EKEKKKEKEKEKKKEK) shows a compositional bias: basic and acidic residues. A compositionally biased stretch (low complexity) spans 448 to 457 (QNNNNNDQNG).

This is an uncharacterized protein from Acidianus bottle-shaped virus (isolate Italy/Pozzuoli) (ABV).